The following is a 125-amino-acid chain: MAISQGKSTRLPSGARNVANRGKRKAELGRDPAETRVDEKRLKKIRTRGGNEKLRLATANKMNLTDPATGKSQVVDVLGVIENSANPNYVRRNIITKGAIVETPEGNAKVTSRPGQDGVLNGILI.

A compositionally biased stretch (polar residues) spans 1 to 11 (MAISQGKSTRL). Residues 1 to 38 (MAISQGKSTRLPSGARNVANRGKRKAELGRDPAETRVD) are disordered. Residues 25–38 (KAELGRDPAETRVD) are compositionally biased toward basic and acidic residues.

This sequence belongs to the eukaryotic ribosomal protein eS8 family. As to quaternary structure, part of the 30S ribosomal subunit.

The sequence is that of Small ribosomal subunit protein eS8 from Methanobrevibacter smithii (strain ATCC 35061 / DSM 861 / OCM 144 / PS).